The primary structure comprises 128 residues: Fluoride-specific ion channel FluC (128 aa).

4 consecutive transmembrane segments (helical) span residues 5-25, 35-55, 67-87, and 96-116; these read IVAI…LSIG, LGTL…VVAF, LFVI…SVEV, and FGWA…LTGL. Na(+)-binding residues include G75 and T78.

This sequence belongs to the fluoride channel Fluc/FEX (TC 1.A.43) family.

It is found in the cell inner membrane. It catalyses the reaction fluoride(in) = fluoride(out). With respect to regulation, na(+) is not transported, but it plays an essential structural role and its presence is essential for fluoride channel function. Functionally, fluoride-specific ion channel. Important for reducing fluoride concentration in the cell, thus reducing its toxicity. This Burkholderia thailandensis (strain ATCC 700388 / DSM 13276 / CCUG 48851 / CIP 106301 / E264) protein is Fluoride-specific ion channel FluC.